The following is a 478-amino-acid chain: Cytochrome c biogenesis protein CcsB (478 aa).

3 helical membrane-spanning segments follow: residues 30 to 50 (LRLA…GTVI), 89 to 109 (TSWF…CSLT), and 175 to 195 (FGPI…IWGS). A disordered region spans residues 453 to 478 (LSSPPSPAKEPPPAARVGGTESLANG). Residues 456–466 (PPSPAKEPPPA) show a composition bias toward pro residues.

It belongs to the Ccs1/CcsB family. May interact with CcsA.

It localises to the cellular thylakoid membrane. In terms of biological role, required during biogenesis of c-type cytochromes (cytochrome c6 and cytochrome f) at the step of heme attachment. The chain is Cytochrome c biogenesis protein CcsB from Synechococcus sp. (strain JA-3-3Ab) (Cyanobacteria bacterium Yellowstone A-Prime).